The chain runs to 373 residues: tRNA pseudouridine synthase Pus10 (373 aa).

Residue D197 is the Nucleophile of the active site. Substrate contacts are provided by Y265 and Y336.

Belongs to the pseudouridine synthase Pus10 family.

The catalysed reaction is uridine(54) in tRNA = pseudouridine(54) in tRNA. It carries out the reaction uridine(55) in tRNA = pseudouridine(55) in tRNA. Its function is as follows. Responsible for synthesis of pseudouridine from uracil-54 and uracil-55 in the psi GC loop of transfer RNAs. The chain is tRNA pseudouridine synthase Pus10 from Korarchaeum cryptofilum (strain OPF8).